The chain runs to 368 residues: V-type proton ATPase subunit C (368 aa).

The protein belongs to the V-ATPase C subunit family. V-ATPase is a heteromultimeric enzyme composed of a peripheral catalytic V1 complex (components A to H) attached to an integral membrane V0 proton pore complex (components: a, c, c', c'' and d).

Subunit of the peripheral V1 complex of vacuolar ATPase. Subunit C is necessary for the assembly of the catalytic sector of the enzyme and is likely to have a specific function in its catalytic activity. V-ATPase is responsible for acidifying a variety of intracellular compartments in eukaryotic cells. This Dictyostelium discoideum (Social amoeba) protein is V-type proton ATPase subunit C (vatC).